An 86-amino-acid polypeptide reads, in one-letter code: Co-chaperonin GroES (86 aa).

The protein belongs to the GroES chaperonin family. Heptamer of 7 subunits arranged in a ring. Interacts with the chaperonin GroEL.

The protein localises to the cytoplasm. In terms of biological role, together with the chaperonin GroEL, plays an essential role in assisting protein folding. The GroEL-GroES system forms a nano-cage that allows encapsulation of the non-native substrate proteins and provides a physical environment optimized to promote and accelerate protein folding. GroES binds to the apical surface of the GroEL ring, thereby capping the opening of the GroEL channel. This chain is Co-chaperonin GroES, found in Campylobacter concisus (strain 13826).